Consider the following 86-residue polypeptide: UPF0297 protein LCABL_08470 (86 aa).

Belongs to the UPF0297 family.

In Lacticaseibacillus casei (strain BL23) (Lactobacillus casei), this protein is UPF0297 protein LCABL_08470.